The chain runs to 405 residues: Multidrug resistance protein MdtA (405 aa).

The first 22 residues, 1-22 (MKTPRRFPLIALTVAAVLTAAA), serve as a signal peptide directing secretion. Polar residues predominate over residues 35–52 (VQNRQGTEQQRASNSQGS). The interval 35-62 (VQNRQGTEQQRASNSQGSAKRAGNAPPV) is disordered.

This sequence belongs to the membrane fusion protein (MFP) (TC 8.A.1) family. Part of a tripartite efflux system composed of MdtA, MdtB and MdtC.

The protein localises to the cell inner membrane. The chain is Multidrug resistance protein MdtA from Erwinia amylovora (strain ATCC 49946 / CCPPB 0273 / Ea273 / 27-3).